An 816-amino-acid chain; its full sequence is Ribonucleoside-diphosphate reductase large subunit (816 aa).

The ATP-cone domain maps to Met1–Lys92. Residues Lys5 to Arg6, Glu11 to Lys17, Thr53, and Asp57 contribute to the ATP site. The GDP site is built by Ser202 and Ser217. A disulfide bridge links Cys218 with Cys444. DTTP is bound by residues Asp226–Ile228, Lys243, Arg256, and Arg263–Gly264. Residue Asn427 coordinates GDP. Catalysis depends on Asn427, which acts as the Proton acceptor. The Cysteine radical intermediate role is filled by Cys429. GDP contacts are provided by residues Glu431 and Thr623–Thr626. The active-site Proton acceptor is the Glu431.

The protein belongs to the ribonucleoside diphosphate reductase large chain family. Heterotetramer of two large/R1 and two small/R2 subunits. A radical transfer pathway may occur between 'Tyr-125' of protein R2 and R1. Post-translationally, contains a disulfide bonds. Binding of the substrate occurs primarily when the active-site cysteines are reduced. In terms of tissue distribution, highly expressed in actively growing tissues such as young leaves, shoot apices, inflorescences and carpels. Very low expression in cotyledons, adult and cauline leaves and senescent leaves.

The protein resides in the cytoplasm. The enzyme catalyses a 2'-deoxyribonucleoside 5'-diphosphate + [thioredoxin]-disulfide + H2O = a ribonucleoside 5'-diphosphate + [thioredoxin]-dithiol. With respect to regulation, under complex allosteric control mediated by deoxynucleoside triphosphates and ATP binding to separate specificity and activation sites on the large subunit. The type of nucleotide bound at the specificity site determines substrate preference. It seems probable that ATP makes the enzyme reduce CDP and UDP, dGTP favors ADP reduction and dTTP favors GDP reduction. Stimulated by ATP and inhibited by dATP binding to the activity site. In terms of biological role, provides the precursors necessary for DNA synthesis. Catalyzes the biosynthesis of deoxyribonucleotides from the corresponding ribonucleotides. R1 contains the binding sites for both substrates and allosteric effectors and carries out the actual reduction of the ribonucleotide. Ribonucleotide reductase (RNR) complex function is essential for efficient organellar DNA degradation in pollen. Involved in chloroplast division. The protein is Ribonucleoside-diphosphate reductase large subunit of Arabidopsis thaliana (Mouse-ear cress).